Reading from the N-terminus, the 578-residue chain is Isocitrate dehydrogenase kinase/phosphatase (578 aa).

Residues 315-321 (APGIRGM) and Lys336 contribute to the ATP site. Asp371 is a catalytic residue.

It belongs to the AceK family.

It localises to the cytoplasm. The enzyme catalyses L-seryl-[isocitrate dehydrogenase] + ATP = O-phospho-L-seryl-[isocitrate dehydrogenase] + ADP + H(+). Functionally, bifunctional enzyme which can phosphorylate or dephosphorylate isocitrate dehydrogenase (IDH) on a specific serine residue. This is a regulatory mechanism which enables bacteria to bypass the Krebs cycle via the glyoxylate shunt in response to the source of carbon. When bacteria are grown on glucose, IDH is fully active and unphosphorylated, but when grown on acetate or ethanol, the activity of IDH declines drastically concomitant with its phosphorylation. The sequence is that of Isocitrate dehydrogenase kinase/phosphatase from Escherichia coli O139:H28 (strain E24377A / ETEC).